Reading from the N-terminus, the 274-residue chain is 3-methyl-2-oxobutanoate hydroxymethyltransferase (274 aa).

Positions 49 and 88 each coordinate Mg(2+). 3-methyl-2-oxobutanoate is bound by residues 49–50, D88, and K118; that span reads DS. E120 contributes to the Mg(2+) binding site. E187 serves as the catalytic Proton acceptor.

Belongs to the PanB family. In terms of assembly, homodecamer; pentamer of dimers. It depends on Mg(2+) as a cofactor.

The protein localises to the cytoplasm. The catalysed reaction is 3-methyl-2-oxobutanoate + (6R)-5,10-methylene-5,6,7,8-tetrahydrofolate + H2O = 2-dehydropantoate + (6S)-5,6,7,8-tetrahydrofolate. It participates in cofactor biosynthesis; (R)-pantothenate biosynthesis; (R)-pantoate from 3-methyl-2-oxobutanoate: step 1/2. Functionally, catalyzes the reversible reaction in which hydroxymethyl group from 5,10-methylenetetrahydrofolate is transferred onto alpha-ketoisovalerate to form ketopantoate. This chain is 3-methyl-2-oxobutanoate hydroxymethyltransferase, found in Parvibaculum lavamentivorans (strain DS-1 / DSM 13023 / NCIMB 13966).